We begin with the raw amino-acid sequence, 314 residues long: Putative peptide transport system permease protein BRA1092/BS1330_II1084 (314 aa).

Transmembrane regions (helical) follow at residues 12-32 (AIPV…LLPG), 101-121 (LALL…VVAA), 135-155 (LALL…VILF), 177-197 (WLRS…GYLA), 237-257 (VSVL…SVVI), and 286-306 (MLFL…LYTI). Positions 95-304 (LPVTISLALL…AINVLVDILY (210 aa)) constitute an ABC transmembrane type-1 domain.

The protein belongs to the binding-protein-dependent transport system permease family. In terms of assembly, the complex is composed of two ATP-binding proteins (BRA1094), two transmembrane proteins (BRA1092 and BRA1093) and a solute-binding protein (BRA1090).

It is found in the cell inner membrane. Its function is as follows. Probably part of an ABC transporter complex that could be involved in peptide import. Probably responsible for the translocation of the substrate across the membrane. The sequence is that of Putative peptide transport system permease protein BRA1092/BS1330_II1084 from Brucella suis biovar 1 (strain 1330).